The chain runs to 368 residues: Peptide chain release factor 2 (368 aa).

Q251 bears the N5-methylglutamine mark.

The protein belongs to the prokaryotic/mitochondrial release factor family. Post-translationally, methylated by PrmC. Methylation increases the termination efficiency of RF2.

The protein resides in the cytoplasm. Peptide chain release factor 2 directs the termination of translation in response to the peptide chain termination codons UGA and UAA. In Nitratiruptor sp. (strain SB155-2), this protein is Peptide chain release factor 2.